Here is a 408-residue protein sequence, read N- to C-terminus: Argininosuccinate synthase (408 aa).

ATP-binding positions include alanine 11–serine 19 and alanine 38. L-citrulline contacts are provided by tyrosine 91 and serine 96. An ATP-binding site is contributed by glycine 121. Residues threonine 123, asparagine 127, and aspartate 128 each contribute to the L-aspartate site. Asparagine 127 contacts L-citrulline. Positions 131, 182, 191, 267, and 279 each coordinate L-citrulline.

It belongs to the argininosuccinate synthase family. Type 1 subfamily. Homotetramer.

It localises to the cytoplasm. It carries out the reaction L-citrulline + L-aspartate + ATP = 2-(N(omega)-L-arginino)succinate + AMP + diphosphate + H(+). It participates in amino-acid biosynthesis; L-arginine biosynthesis; L-arginine from L-ornithine and carbamoyl phosphate: step 2/3. The protein is Argininosuccinate synthase of Azorhizobium caulinodans (strain ATCC 43989 / DSM 5975 / JCM 20966 / LMG 6465 / NBRC 14845 / NCIMB 13405 / ORS 571).